We begin with the raw amino-acid sequence, 336 residues long: MIINHNTSAINASRNNGINAANLSKTQEKLSSGYRINRASDDAAGMGVSGKINAQIRGLSQASRNTSKAINFIQTTEGNLNEVEKVLVRMKELAVQSGNGTYSDADRGSIQIEIEQLTDEINRIADQAQYNQMHMLSNKSASQNVRTAEELGMQPAKINTPASLSGSQASWTLRVHVGANQDEAIAVNIYAANVANLFSGEGAQTAQAAPVQEGVQQEGAQQPAPATAPSQGGVNSPVNVTTTVDANTSLAKIENAIRMISDQRANLGAFQNRLESIKDSTEYAIENLKASYAQIKDATMTDEVVAATTNSILTQSAMAMIAQANQVPQYVLSLLR.

The disordered stretch occupies residues 208 to 236 (AAPVQEGVQQEGAQQPAPATAPSQGGVNS). Over residues 210-233 (PVQEGVQQEGAQQPAPATAPSQGG) the composition is skewed to low complexity.

It belongs to the bacterial flagellin family. As to quaternary structure, the flagellum consists of an outer layer composed of repeating units of FlaA around a core that contains several antigenically related polypeptides.

Its subcellular location is the periplasmic flagellum. The protein resides in the periplasm. Component of the core of the flagella. The sequence is that of Flagellar filament 41 kDa core protein (fla) from Borreliella burgdorferi (strain ATCC 35210 / DSM 4680 / CIP 102532 / B31) (Borrelia burgdorferi).